The primary structure comprises 73 residues: Translation initiation factor IF-1 (73 aa).

The 73-residue stretch at 1-73 (MANKEELIEF…TKGRITYRAR (73 aa)) folds into the S1-like domain.

It belongs to the IF-1 family. In terms of assembly, component of the 30S ribosomal translation pre-initiation complex which assembles on the 30S ribosome in the order IF-2 and IF-3, IF-1 and N-formylmethionyl-tRNA(fMet); mRNA recruitment can occur at any time during PIC assembly.

It is found in the cytoplasm. Its function is as follows. One of the essential components for the initiation of protein synthesis. Stabilizes the binding of IF-2 and IF-3 on the 30S subunit to which N-formylmethionyl-tRNA(fMet) subsequently binds. Helps modulate mRNA selection, yielding the 30S pre-initiation complex (PIC). Upon addition of the 50S ribosomal subunit IF-1, IF-2 and IF-3 are released leaving the mature 70S translation initiation complex. This is Translation initiation factor IF-1 from Acinetobacter baumannii (strain ATCC 17978 / DSM 105126 / CIP 53.77 / LMG 1025 / NCDC KC755 / 5377).